Here is a 349-residue protein sequence, read N- to C-terminus: Hydroxymethylglutaryl-CoA synthase (349 aa).

Residues Asp-29 and Ala-30 each contribute to the (3S)-3-hydroxy-3-methylglutaryl-CoA site. Catalysis depends on Glu-81, which acts as the Proton donor/acceptor. (3S)-3-hydroxy-3-methylglutaryl-CoA is bound by residues Cys-113 and Thr-154. Cys-113 acts as the Acyl-thioester intermediate in catalysis. Arg-202 lines the CoA pocket. Positions 204 and 237 each coordinate (3S)-3-hydroxy-3-methylglutaryl-CoA. His-237 serves as the catalytic Proton donor/acceptor. CoA is bound at residue Lys-242. The (3S)-3-hydroxy-3-methylglutaryl-CoA site is built by Arg-246, Asn-269, and Ser-299.

Belongs to the thiolase-like superfamily. Archaeal HMG-CoA synthase family. Interacts with acetoacetyl-CoA thiolase that catalyzes the precedent step in the pathway and with a DUF35 protein. The acetoacetyl-CoA thiolase/HMG-CoA synthase complex channels the intermediate via a fused CoA-binding site, which allows for efficient coupling of the endergonic thiolase reaction with the exergonic HMGCS reaction.

It catalyses the reaction acetoacetyl-CoA + acetyl-CoA + H2O = (3S)-3-hydroxy-3-methylglutaryl-CoA + CoA + H(+). It functions in the pathway metabolic intermediate biosynthesis; (R)-mevalonate biosynthesis; (R)-mevalonate from acetyl-CoA: step 2/3. Its function is as follows. Catalyzes the condensation of acetyl-CoA with acetoacetyl-CoA to form 3-hydroxy-3-methylglutaryl-CoA (HMG-CoA). Functions in the mevalonate (MVA) pathway leading to isopentenyl diphosphate (IPP), a key precursor for the biosynthesis of isoprenoid compounds that are building blocks of archaeal membrane lipids. The polypeptide is Hydroxymethylglutaryl-CoA synthase (Methanococcoides burtonii (strain DSM 6242 / NBRC 107633 / OCM 468 / ACE-M)).